Reading from the N-terminus, the 177-residue chain is Large ribosomal subunit protein bL9 (177 aa).

Belongs to the bacterial ribosomal protein bL9 family.

Binds to the 23S rRNA. The polypeptide is Large ribosomal subunit protein bL9 (Rhodopirellula baltica (strain DSM 10527 / NCIMB 13988 / SH1)).